The primary structure comprises 109 residues: Aquaporin-2 (109 aa).

Residues 1–6 (SIAFSR) lie on the Cytoplasmic side of the membrane. The chain crosses the membrane as a helical span at residues 7 to 27 (AVFSEFLATLLFVFFGLGSAL). Over 28–35 (NWPQALPS) the chain is Extracellular. Residues 36 to 54 (VLQIAMAFGLAIGTLVQTL) form a helical membrane-spanning segment. The Cytoplasmic segment spans residues 55–59 (GHISG). Positions 60–69 (AHINPAVTVA) form an intramembrane region, discontinuously helical. The NPA 1 signature appears at 63-65 (NPA). Residues 70-80 (CLVGCHVSFLR) lie on the Cytoplasmic side of the membrane. A helical membrane pass occupies residues 81–102 (ATFYVAAQLLGAVAGAALLHEL). Residues 103-109 (TPPDIRG) are Extracellular-facing.

The protein belongs to the MIP/aquaporin (TC 1.A.8) family. As to quaternary structure, homotetramer. In terms of processing, serine phosphorylation is necessary and sufficient for expression at the apical membrane. Endocytosis is not phosphorylation-dependent. N-glycosylated.

The protein resides in the apical cell membrane. It localises to the basolateral cell membrane. The protein localises to the cell membrane. Its subcellular location is the cytoplasmic vesicle membrane. It is found in the golgi apparatus. The protein resides in the trans-Golgi network membrane. It catalyses the reaction H2O(in) = H2O(out). The catalysed reaction is glycerol(in) = glycerol(out). In terms of biological role, forms a water-specific channel that provides the plasma membranes of renal collecting duct with high permeability to water, thereby permitting water to move in the direction of an osmotic gradient. Plays an essential role in renal water homeostasis. Could also be permeable to glycerol. The chain is Aquaporin-2 from Amblysomus hottentotus (Hottentot golden mole).